A 166-amino-acid polypeptide reads, in one-letter code: SUMO-conjugating enzyme UBC9 (166 aa).

Residues 4–157 (IAAGRLAEER…VKKEAVKYAA (154 aa)) form the UBC core domain. Cys93 (glycyl thioester intermediate) is an active-site residue.

This sequence belongs to the ubiquitin-conjugating enzyme family. Interacts with brd-1 and rad-51. Interacts with smo-1 and sop-2. Interacts with bet-1 (via BROMO domain 2). Interacts with isoforms 1 and 2 of X-box-binding protein xbp-1.

The protein localises to the nucleus envelope. Its pathway is protein modification; protein sumoylation. In terms of biological role, accepts the ubiquitin-like protein smo-1 from the aos-1-uba-2 E1 complex and catalyzes its covalent attachment to other proteins with the help of an E3 ligase such as gei-17. Required to sumoylate the ETS transcription factor lin-1, Polycomb protein sop-2, and intermediate filament proteins, such as ifb-1. Required for embryonic development, fertility, vulval morphogenesis, inhibition of vulval cell fates, lifespan, and neuromuscular activity. In Caenorhabditis elegans, this protein is SUMO-conjugating enzyme UBC9.